The sequence spans 513 residues: 2,3-bisphosphoglycerate-independent phosphoglycerate mutase (513 aa).

Aspartate 13 and serine 63 together coordinate Mn(2+). Catalysis depends on serine 63, which acts as the Phosphoserine intermediate. Residues histidine 124, 154–155 (RD), arginine 186, arginine 192, 262–265 (RADR), and lysine 335 contribute to the substrate site. Mn(2+) is bound by residues aspartate 402, histidine 406, aspartate 443, histidine 444, and histidine 462.

The protein belongs to the BPG-independent phosphoglycerate mutase family. As to quaternary structure, monomer. Mn(2+) serves as cofactor.

It catalyses the reaction (2R)-2-phosphoglycerate = (2R)-3-phosphoglycerate. It participates in carbohydrate degradation; glycolysis; pyruvate from D-glyceraldehyde 3-phosphate: step 3/5. Its function is as follows. Catalyzes the interconversion of 2-phosphoglycerate and 3-phosphoglycerate. This chain is 2,3-bisphosphoglycerate-independent phosphoglycerate mutase, found in Shewanella amazonensis (strain ATCC BAA-1098 / SB2B).